A 198-amino-acid chain; its full sequence is Secreted RxLR effector protein PITG_22926 (198 aa).

A signal peptide spans 1-20; it reads MLRSFLLIVATVSLFGQCKP. The RxLR-dEER signature appears at 43–52; the sequence is RFLRTNDEER.

The protein belongs to the RxLR effector family. As to quaternary structure, interacts with host MAP3Kbeta2 in the nucleoplasm.

The protein resides in the secreted. It localises to the host nucleus. The protein localises to the host nucleolus. Secreted effector that promotes P.infestans colonization of plant host. Specifically suppresses Avr4/Cf4- and AvrPto/Pto-triggered cell death. Targets the potato MAP3Kbeta2 kinase, a positive regulator of cell death associated with plant immunity, and perturbs signaling pathways triggered by MAP3Kbeta2. This Phytophthora infestans (strain T30-4) (Potato late blight agent) protein is Secreted RxLR effector protein PITG_22926.